A 271-amino-acid polypeptide reads, in one-letter code: uncharacterized protein (271 aa).

The protein belongs to the metallo-dependent hydrolases superfamily. Peptidase M19 family.

This is an uncharacterized protein from Klebsiella pneumoniae.